The chain runs to 494 residues: Cytochrome P450 71D94 (494 aa).

The helical; Signal-anchor for type II membrane protein transmembrane segment at 1 to 21 (MELNLLLVIIILVATYTVSLL) threads the bilayer. Residue Cys-434 participates in heme binding.

It belongs to the cytochrome P450 family. The cofactor is heme.

Its subcellular location is the endoplasmic reticulum membrane. Its function is as follows. Cytochrome P450 oxygenase of undefined substrate. Not active with limonene, (+)- or (-)-piperitone, (-)-isopiperitone, piperitenone or (+)-pulegone. This chain is Cytochrome P450 71D94 (CYP71D94), found in Mentha gracilis (Gingermint).